The chain runs to 527 residues: Heat shock factor protein HSF8 (527 aa).

Positions 1 to 13 are enriched in low complexity; that stretch reads MEPNSSGSGKAAV. Disordered stretches follow at residues 1-37, 130-160, 243-275, 300-343, and 476-501; these read MEPN…PSAN, RRKP…HSAS, NESN…ADGQ, SPRL…TSGK, and QSPS…QING. Residues 25–37 are compositionally biased toward pro residues; sequence QPAPAPAPMPSAN. A DNA-binding region spans residues 39–133; that stretch reads PPPFLVKTYD…LLKSISRRKP (95 aa). A compositionally biased stretch (low complexity) spans 136–157; sequence GHAQQQQQPHGHAQQQMQPPGH. Polar residues-rich tracts occupy residues 319–328 and 491–501; these read SPQSNASSGR and NTSETKPQING.

The protein belongs to the HSF family. Homotrimer. In terms of processing, exhibits temperature-dependent phosphorylation.

The protein resides in the nucleus. Functionally, DNA-binding protein that specifically binds heat shock promoter elements (HSE) and activates transcription. The protein is Heat shock factor protein HSF8 (HSF8) of Solanum peruvianum (Peruvian tomato).